A 142-amino-acid chain; its full sequence is Large ribosomal subunit protein uL13 (142 aa).

Belongs to the universal ribosomal protein uL13 family. Part of the 50S ribosomal subunit.

In terms of biological role, this protein is one of the early assembly proteins of the 50S ribosomal subunit, although it is not seen to bind rRNA by itself. It is important during the early stages of 50S assembly. This chain is Large ribosomal subunit protein uL13, found in Laribacter hongkongensis (strain HLHK9).